Consider the following 130-residue polypeptide: Zinc finger A20 and AN1 domain-containing stress-associated protein 10 (130 aa).

Residues 4–38 (ETEALPCEGGCGLYGTRVNNNLCSLCYKKSVLQHS) form an A20-type zinc finger. Residues C10, C14, C26, C29, C71, C74, C85, C87, C92, H95, H101, and C103 each coordinate Zn(2+). The AN1-type zinc finger occupies 65–111 (PVKKRRCGICKRKVGMLGFKCRCGHMFCGSHRYPEEHSCPFDYKQSG).

Its function is as follows. May be involved in environmental stress response. This Arabidopsis thaliana (Mouse-ear cress) protein is Zinc finger A20 and AN1 domain-containing stress-associated protein 10 (SAP10).